Consider the following 121-residue polypeptide: Replication protein A 14 kDa subunit (121 aa).

Valine 2 is subject to N-acetylvaline. Residues lysine 23, lysine 39, and lysine 88 each participate in a glycyl lysine isopeptide (Lys-Gly) (interchain with G-Cter in ubiquitin) cross-link.

This sequence belongs to the replication factor A protein 3 family. Component of the canonical replication protein A complex (RPA), a heterotrimer composed of RPA1, RPA2 and RPA3. Also a component of the aRPA, the alternative replication protein A complex, a trimeric complex similar to the replication protein A complex/RPA but where RPA1 and RPA3 are associated with RPA4 instead of RPA2. Interacts with BRIP1/FANCJ via the RPA1 subunit; following DNA damage they colocalize in foci in the nucleus. Ubiquitinated by RFWD3 at stalled replication forks in response to DNA damage: ubiquitination by RFWD3 does not lead to degradation by the proteasome and promotes removal of the RPA complex from stalled replication forks, promoting homologous recombination.

The protein localises to the nucleus. Functionally, as part of the heterotrimeric replication protein A complex (RPA/RP-A), binds and stabilizes single-stranded DNA intermediates that form during DNA replication or upon DNA stress. It prevents their reannealing and in parallel, recruits and activates different proteins and complexes involved in DNA metabolism. Thereby, it plays an essential role both in DNA replication and the cellular response to DNA damage. In the cellular response to DNA damage, the RPA complex controls DNA repair and DNA damage checkpoint activation. Through recruitment of ATRIP activates the ATR kinase a master regulator of the DNA damage response. It is required for the recruitment of the DNA double-strand break repair factors RAD51 and RAD52 to chromatin, in response to DNA damage. Also recruits to sites of DNA damage proteins like XPA and XPG that are involved in nucleotide excision repair and is required for this mechanism of DNA repair. Also plays a role in base excision repair (BER), probably through interaction with UNG. RPA stimulates 5'-3' helicase activity of BRIP1/FANCJ. Also recruits SMARCAL1/HARP, which is involved in replication fork restart, to sites of DNA damage. May also play a role in telomere maintenance. RPA3 has its own single-stranded DNA-binding activity and may be responsible for polarity of the binding of the complex to DNA. As part of the alternative replication protein A complex, aRPA, binds single-stranded DNA and probably plays a role in DNA repair. Compared to the RPA2-containing, canonical RPA complex, may not support chromosomal DNA replication and cell cycle progression through S-phase. The aRPA may not promote efficient priming by DNA polymerase alpha but could support DNA synthesis by polymerase delta in presence of PCNA and replication factor C (RFC), the dual incision/excision reaction of nucleotide excision repair and RAD51-dependent strand exchange. This is Replication protein A 14 kDa subunit (RPA3) from Homo sapiens (Human).